Reading from the N-terminus, the 295-residue chain is SPX domain-containing protein 1 (295 aa).

Residues 1–166 enclose the SPX domain; that stretch reads MKFGKSLSSQ…GALIRLPFIQ (166 aa). The tract at residues 199–227 is disordered; the sequence is LSVSSEDGRGDSTNEDKPSNPSSSLVNGG. Residues 204–216 are compositionally biased toward basic and acidic residues; sequence EDGRGDSTNEDKP.

As to quaternary structure, interacts (via SPX domain) with PHR2 (via C-terminus). Interacts with RLI1 in the nucleus to prevents its positive regulation of leaf inclination during phosphate (Pi) starvation. As to expression, predominantly expressed in roots and leaves. Localized in leaves lamina joints.

It is found in the nucleus. Involved in plant adaptation to phosphate (Pi) starvation. Inhibits PHR2 DNA-binding activity via a Pi-dependent protein interaction. Suppresses the regulation on expression of PT2 by PHR2 and accumulation of shoot Pi. Optimizes growth under phosphate-limited conditions through a negative feedback loop of the PSI (phosphate starvation-induced) signaling pathway. Regulates the expression of SPX2, SPX3 and SPX5. May be an important link between signal transduction pathways related to phosphate starvation and cold stress. Together with SPX2, plays a negative role in the regulation of leaf inclination by preventing RLI1 transcription factor activity in Pi depleted conditions. This Oryza sativa subsp. japonica (Rice) protein is SPX domain-containing protein 1.